Reading from the N-terminus, the 296-residue chain is MKDKLVKAIAKDGQVRIIGAITTELVNEGVKLHNCAPTAAAALGRMLTAGALMGTTLKSEKDTLTLQIHGGGIAKGVVVTSYADGHVKGYIGNPTADIEPNSKGKLDVSGIIGKNGNLLVIRDMGLKEPYIGQVPIYTGEIGEDLAYYYTVSEQTPSAVGLGVLVDKDLSIKSAGGFIIQMMPGADEMLADLISYRLEEIPSITEMISKGMTIEEILEYIFEDMDLNILESIVPEYRCDCSREKVERALASIGQKDLKEIYDEGKEEELKCHFCNKAYTFSHDEIGDILESYYNEK.

Disulfide bonds link Cys238-Cys240 and Cys271-Cys274.

This sequence belongs to the HSP33 family. Post-translationally, under oxidizing conditions two disulfide bonds are formed involving the reactive cysteines. Under reducing conditions zinc is bound to the reactive cysteines and the protein is inactive.

It localises to the cytoplasm. Redox regulated molecular chaperone. Protects both thermally unfolding and oxidatively damaged proteins from irreversible aggregation. Plays an important role in the bacterial defense system toward oxidative stress. In Clostridium botulinum (strain 657 / Type Ba4), this protein is 33 kDa chaperonin.